Reading from the N-terminus, the 239-residue chain is Vesicle-associated protein 1-2 (239 aa).

An N-acetylmethionine modification is found at methionine 1. Over 1–215 (MSNELLTIDP…RRESKRSKSG (215 aa)) the chain is Cytoplasmic. An N-acetylserine; in Vesicle-associated protein 1-2, N-terminally processed modification is found at serine 2. An MSP domain is found at 5–125 (LLTIDPVDLQ…EETKLRVVYV (121 aa)). The tract at residues 123–174 (VYVAPPRPPSPVREGSEEGSSPRASVSDNGNASDFTAAPRFSADRVDAQDNS) is disordered. Serine 132 is subject to Phosphoserine. Positions 140–156 (EGSSPRASVSDNGNASD) are enriched in polar residues. Position 164 is a phosphoserine (serine 164). The stretch at 169–215 (DAQDNSSEARALVTKLTEEKNSAVQLNNRLQQELDQLRRESKRSKSG) forms a coiled coil. The helical; Anchor for type IV membrane protein transmembrane segment at 216–236 (GIPFMYVLLVGLIGLILGYIM) threads the bilayer.

It belongs to the VAMP-associated protein (VAP) (TC 9.B.17) family. As to quaternary structure, interacts with ORP3A. Binds to VLG at the endomembrane system.

It is found in the endoplasmic reticulum membrane. Vesicle-associated protein that binds the oxysterol-binding protein ORP3A and allows its targeting to the ER. This chain is Vesicle-associated protein 1-2, found in Arabidopsis thaliana (Mouse-ear cress).